Here is a 378-residue protein sequence, read N- to C-terminus: tRNA N(3)-cytidine methyltransferase METTL2B (378 aa).

A2 bears the N-acetylalanine mark. S4 bears the Phosphoserine mark. Residues W78 and Y82 each coordinate S-adenosyl-L-methionine. Position 154 is a phosphothreonine (T154). G188, D213, D239, L240, and I260 together coordinate S-adenosyl-L-methionine.

Belongs to the methyltransferase superfamily. METL family. In terms of assembly, monomer. Interacts with DALRD3.

The protein localises to the cytoplasm. It carries out the reaction cytidine(32) in tRNA(Thr) + S-adenosyl-L-methionine = N(3)-methylcytidine(32) in tRNA(Thr) + S-adenosyl-L-homocysteine + H(+). The enzyme catalyses cytidine(32) in tRNA(Arg)(CCU) + S-adenosyl-L-methionine = N(3)-methylcytidine(32) in tRNA(Arg)(CCU) + S-adenosyl-L-homocysteine + H(+). Functionally, S-adenosyl-L-methionine-dependent methyltransferase that mediates N(3)-methylcytidine modification of residue 32 of the tRNA anticodon loop of tRNA(Thr)(UGU) and tRNA(Arg)(CCU). The sequence is that of tRNA N(3)-cytidine methyltransferase METTL2B from Homo sapiens (Human).